The following is a 403-amino-acid chain: Serine/threonine transporter SstT (403 aa).

Transmembrane regions (helical) follow at residues 14 to 34 (VTQI…APAI), 44 to 64 (VFVS…VMAS), 79 to 99 (ILWL…VASM), 138 to 158 (ALLN…GVAL), 175 to 195 (GVTL…FGLV), 214 to 234 (LAVL…LIVF), 295 to 315 (MAGA…TLGI), 327 to 347 (VVAA…LLLI), and 353 to 373 (LFGI…IIGV).

It belongs to the dicarboxylate/amino acid:cation symporter (DAACS) (TC 2.A.23) family.

The protein resides in the cell inner membrane. The enzyme catalyses L-serine(in) + Na(+)(in) = L-serine(out) + Na(+)(out). It carries out the reaction L-threonine(in) + Na(+)(in) = L-threonine(out) + Na(+)(out). Its function is as follows. Involved in the import of serine and threonine into the cell, with the concomitant import of sodium (symport system). This chain is Serine/threonine transporter SstT, found in Pseudomonas putida (strain ATCC 700007 / DSM 6899 / JCM 31910 / BCRC 17059 / LMG 24140 / F1).